The primary structure comprises 453 residues: tRNA (guanine-N(7)-)-methyltransferase non-catalytic subunit TRM82 (453 aa).

A disordered region spans residues 69–99; that stretch reads ENEEKGIKKSKTNEGNTIEKKHDAKIPVPGP. WD repeat units lie at residues 103–143 and 244–286; these read PIYS…NDNC and GHKE…DEFD.

Belongs to the WD repeat TRM82 family. In terms of assembly, forms a heterodimer with the catalytic subunit TRM8.

The protein localises to the nucleus. It functions in the pathway tRNA modification; N(7)-methylguanine-tRNA biosynthesis. Required for the formation of N(7)-methylguanine at position 46 (m7G46) in tRNA. In the complex, it is required to stabilize and induce conformational changes of the catalytic subunit. The sequence is that of tRNA (guanine-N(7)-)-methyltransferase non-catalytic subunit TRM82 from Vanderwaltozyma polyspora (strain ATCC 22028 / DSM 70294 / BCRC 21397 / CBS 2163 / NBRC 10782 / NRRL Y-8283 / UCD 57-17) (Kluyveromyces polysporus).